The chain runs to 375 residues: Probable trehalose-phosphate phosphatase 7 (375 aa).

Belongs to the trehalose phosphatase family. The cofactor is a divalent metal cation.

The enzyme catalyses alpha,alpha-trehalose 6-phosphate + H2O = alpha,alpha-trehalose + phosphate. It participates in glycan biosynthesis; trehalose biosynthesis. In terms of biological role, removes the phosphate from trehalose 6-phosphate to produce free trehalose. Trehalose accumulation in plant may improve abiotic stress tolerance. The chain is Probable trehalose-phosphate phosphatase 7 (TPP7) from Oryza sativa subsp. japonica (Rice).